The following is a 292-amino-acid chain: uncharacterized protein (292 aa).

Residues threonine 43 and tyrosine 105 each act as charge relay system in the active site. The active-site Proton donor is the tyrosine 131. Lysine 159 functions as the Schiff-base intermediate with substrate in the catalytic mechanism.

It belongs to the DapA family. As to quaternary structure, homotetramer.

The protein resides in the cytoplasm. This is an uncharacterized protein from Thermococcus kodakarensis (strain ATCC BAA-918 / JCM 12380 / KOD1) (Pyrococcus kodakaraensis (strain KOD1)).